We begin with the raw amino-acid sequence, 138 residues long: Brain natriuretic peptide (138 aa).

The first 22 residues, M1–T22, serve as a signal peptide directing secretion. Disordered regions lie at residues E50–D84 and S99–R138. Residues C111 and C127 are joined by a disulfide bond.

It belongs to the natriuretic peptide family.

It localises to the secreted. Its function is as follows. Cardiac hormone which may function as a paracrine antifibrotic factor in the heart. Also plays a key role in cardiovascular homeostasis through natriuresis, diuresis, vasorelaxation, and inhibition of renin and aldosterone secretion. This Oreochromis mossambicus (Mozambique tilapia) protein is Brain natriuretic peptide (nppb).